We begin with the raw amino-acid sequence, 404 residues long: Multidrug resistance protein MdtG (404 aa).

A run of 11 helical transmembrane segments spans residues 19–39 (LGCF…PLYV), 56–76 (LVFS…GGLA), 90–110 (LGMA…QFLI), 113–133 (ALLG…ATQV), 144–164 (TLST…GLLA), 171–191 (PVFF…FFFI), 222–242 (LFVT…ILTL), 254–274 (IAFI…LSAP), 288–308 (ILIV…FVQT), 317–337 (FLLG…LVYN), and 376–396 (AVFC…WNSL).

Belongs to the major facilitator superfamily. DHA1 family. MdtG (TC 2.A.1.2.20) subfamily.

Its subcellular location is the cell inner membrane. This Salmonella arizonae (strain ATCC BAA-731 / CDC346-86 / RSK2980) protein is Multidrug resistance protein MdtG.